The following is an 88-amino-acid chain: Small ribosomal subunit protein uS17 (88 aa).

It belongs to the universal ribosomal protein uS17 family. As to quaternary structure, part of the 30S ribosomal subunit.

Its function is as follows. One of the primary rRNA binding proteins, it binds specifically to the 5'-end of 16S ribosomal RNA. The sequence is that of Small ribosomal subunit protein uS17 from Mycoplasmopsis pulmonis (strain UAB CTIP) (Mycoplasma pulmonis).